We begin with the raw amino-acid sequence, 55 residues long: Sec-independent protein translocase protein TatA (55 aa).

A helical transmembrane segment spans residues 1–21; the sequence is MFGELGVPEVLFILGIALLIF.

Belongs to the TatA/E family. As to quaternary structure, forms a complex with TatC.

The protein localises to the cell inner membrane. Part of the twin-arginine translocation (Tat) system that transports large folded proteins containing a characteristic twin-arginine motif in their signal peptide across membranes. TatA could form the protein-conducting channel of the Tat system. The protein is Sec-independent protein translocase protein TatA of Koribacter versatilis (strain Ellin345).